The sequence spans 92 residues: MAKRTKKVGIVGKYGTRYGASLRKVVKKTEVSQHSKFFCDFCGKYGMKRQAVGIWCCKGCNKTKAGGAYSLNTGGSVTVRSTIRRLREATEK.

A C4-type zinc finger spans residues 39–60 (CDFCGKYGMKRQAVGIWCCKGC).

The protein belongs to the eukaryotic ribosomal protein eL43 family.

The chain is Large ribosomal subunit protein eL43 (RPL37a) from Ostreococcus tauri.